Consider the following 236-residue polypeptide: Purine nucleoside phosphorylase DeoD-type (236 aa).

Histidine 5 lines the a purine D-ribonucleoside pocket. Residues glycine 21, arginine 25, arginine 44, and 88-91 (RVGT) contribute to the phosphate site. A purine D-ribonucleoside is bound by residues 180–182 (EME) and 204–205 (SD). Aspartate 205 acts as the Proton donor in catalysis.

Belongs to the PNP/UDP phosphorylase family. As to quaternary structure, homohexamer; trimer of homodimers.

The catalysed reaction is a purine D-ribonucleoside + phosphate = a purine nucleobase + alpha-D-ribose 1-phosphate. It carries out the reaction a purine 2'-deoxy-D-ribonucleoside + phosphate = a purine nucleobase + 2-deoxy-alpha-D-ribose 1-phosphate. Its function is as follows. Catalyzes the reversible phosphorolytic breakdown of the N-glycosidic bond in the beta-(deoxy)ribonucleoside molecules, with the formation of the corresponding free purine bases and pentose-1-phosphate. The polypeptide is Purine nucleoside phosphorylase DeoD-type (Shewanella frigidimarina (strain NCIMB 400)).